Here is a 311-residue protein sequence, read N- to C-terminus: Delta-1-pyrroline-5-carboxylate reductase kk1I (311 aa).

The signal sequence occupies residues 1 to 31 (MTKRESNTLAVLGCGMVFLVSLLDLANRLLG). A glycan (N-linked (GlcNAc...) asparagine) is linked at Asn59.

This sequence belongs to the pyrroline-5-carboxylate reductase family.

It participates in secondary metabolite biosynthesis. Delta-1-pyrroline-5-carboxylate reductase; part of the gene cluster that mediates the biosynthesis of KK-1, a novel cyclic depsipeptide with 10 residues which is a promising active compound with high activity against many plant pathogens, especially Botrytis cinerea. Within the pathway, kk1I catalyzes the synthesis of the L-pipecolic acid residue of KK-1 from delta-1-pyrroline-5-carboxylate (P5C), a metabolic intermediate of lysine. The nonribosomal peptide synthetase (NRPS) kk1B catalyzes the elongation and cyclization of the decapeptide chain composed of 1 D-lactic acid residue (D-Lac), 1 pipecolic acid residue (Pip), 1 aspartic acid residue (Asp), 1 isoleucine residue (Ile), 1 glycine residue (Gly), 1 tyrosine residue (Tyr) and 4 valine residues (Val). The Asp, Ile and 3 Val residues are N-methylated by the 5 methyltransferase domains from the NRPS (found in modules 3, 5, 6, 7 and 9), whereas the Tyr residue is O-methylated by the cluster encoded O-methyltransferase kk1A. The thioesterase kk1J is likely to be involved in the corrective mechanism of peptide chain synthesis. The D-lactate dehydrogenase kk1H is involved in the synthesis of D-lactic acid from pyruvic acid, which is recognized by the A domain of the first kk1B module. The pyrroline-5-carboxylate reductase kk1I is involved in the synthesis of the L-pipecolic acid residue of KK-1 from delta-1-pyrroline-5-carboxylate (P5C), a metabolic intermediate of lysine. It still is unclear how kk1C and kk1D are involved in the production of KK-1. The protein is Delta-1-pyrroline-5-carboxylate reductase kk1I of Curvularia clavata.